Here is a 215-residue protein sequence, read N- to C-terminus: Urease accessory protein UreG (215 aa).

24–31 is a binding site for GTP; the sequence is GPVGSGKT.

The protein belongs to the SIMIBI class G3E GTPase family. UreG subfamily. In terms of assembly, homodimer. UreD, UreF and UreG form a complex that acts as a GTP-hydrolysis-dependent molecular chaperone, activating the urease apoprotein by helping to assemble the nickel containing metallocenter of UreC. The UreE protein probably delivers the nickel.

The protein localises to the cytoplasm. Its function is as follows. Facilitates the functional incorporation of the urease nickel metallocenter. This process requires GTP hydrolysis, probably effectuated by UreG. The protein is Urease accessory protein UreG of Burkholderia ambifaria (strain ATCC BAA-244 / DSM 16087 / CCUG 44356 / LMG 19182 / AMMD) (Burkholderia cepacia (strain AMMD)).